We begin with the raw amino-acid sequence, 1450 residues long: ABC transporter G family member 37 (1450 aa).

The 273-residue stretch at 175 to 447 folds into the ABC transporter 1 domain; sequence VKLTGAKTHE…FEDCGFRCPE (273 aa). 207-214 provides a ligand contact to ATP; that stretch reads GPPSCGKT. An ABC transmembrane type-2 1 domain is found at 525 to 737; that stretch reads ELFIACISRE…GEIGLSVNEF (213 aa). A run of 6 helical transmembrane segments spans residues 544–564, 581–601, 615–635, 661–681, 687–707, and 773–793; these read VYIF…TVFI, ALFF…SMTA, FYPA…LSFF, FILL…LAAI, ASIT…GFVI, and LCAL…ALTF. The disordered stretch occupies residues 810 to 838; the sequence is SELQGTEKSTEDSSVRKKTTDSPVKTEEE. Basic and acidic residues predominate over residues 817–838; that stretch reads KSTEDSSVRKKTTDSPVKTEEE. Residues 850-1103 form the ABC transporter 2 domain; it reads VTFQDLNYFV…IIEYFESVPE (254 aa). 895–902 serves as a coordination point for ATP; sequence GVSGAGKT. One can recognise an ABC transmembrane type-2 2 domain in the interval 1175-1389; the sequence is GQFKSILWKM…TLNGFISSQY (215 aa). Helical transmembrane passes span 1194-1214, 1226-1246, 1282-1302, 1313-1333, 1339-1359, 1365-1385, and 1422-1442; these read YNLM…ALFW, MFTV…NNCA, IPYI…MIGF, LYSM…LVSI, VAAI…GFLI, PGWW…NGFI, and VTAV…AFFV.

This sequence belongs to the ABC transporter superfamily. ABCG family. PDR (TC 3.A.1.205) subfamily. As to expression, expressed in roots and, to a lower extent, in seedlings.

It localises to the cell membrane. In terms of biological role, together with ABCG36, regulates auxin homeostasis and responses by playing a dual role in coumarin (and derivatives) and in the auxin precursor indole 3-butyric acid (IBA) efflux transport, thus influencing roots and root hairs development. Mediates coumarin exudation in the rhizosphere, especially in iron (Fe) deficient conditions, with a strong specificity for highly oxygenated compounds such as scopoletin and derivatives, dihydroxyscopoletin, esculetin, fraxin, fraxetin and esculin; these molecules improve plant Fe nutrition. Involved in the cellular detoxification of xenobiotics by promoting the excretion of some auxinic herbicides including 2,4-dichlorophenoxyacetic acid (2,4-D), 4-(2,4-dichlorophenoxy)butyric acid (2,4-DB) and other members of the phenoxyalkanoic acid family as well as the polar auxin transport inhibitor, napthylphthalamic acid (NPA). May be a general defense protein. The chain is ABC transporter G family member 37 from Arabidopsis thaliana (Mouse-ear cress).